A 306-amino-acid chain; its full sequence is Ornithine carbamoyltransferase (306 aa).

Carbamoyl phosphate contacts are provided by residues Ser51 to Thr54, Gln78, Arg102, and His129 to Gln132. L-ornithine contacts are provided by residues Asn159, Asp223, and Ser227–Met228. Carbamoyl phosphate-binding positions include Cys263–Leu264 and Arg291.

Belongs to the aspartate/ornithine carbamoyltransferase superfamily. OTCase family.

The protein resides in the cytoplasm. The catalysed reaction is carbamoyl phosphate + L-ornithine = L-citrulline + phosphate + H(+). It participates in amino-acid biosynthesis; L-arginine biosynthesis; L-arginine from L-ornithine and carbamoyl phosphate: step 1/3. Reversibly catalyzes the transfer of the carbamoyl group from carbamoyl phosphate (CP) to the N(epsilon) atom of ornithine (ORN) to produce L-citrulline. The protein is Ornithine carbamoyltransferase of Sulfurovum sp. (strain NBC37-1).